Consider the following 487-residue polypeptide: Malonate-semialdehyde dehydrogenase 3 (487 aa).

The NAD(+) site is built by Phe-154, Lys-178, Glu-181, Arg-182, and Ser-231. The Nucleophile role is filled by Cys-286. Glu-386 provides a ligand contact to NAD(+).

It belongs to the aldehyde dehydrogenase family. IolA subfamily. Homotetramer.

It catalyses the reaction 3-oxopropanoate + NAD(+) + CoA + H2O = hydrogencarbonate + acetyl-CoA + NADH + H(+). The enzyme catalyses 2-methyl-3-oxopropanoate + NAD(+) + CoA + H2O = propanoyl-CoA + hydrogencarbonate + NADH + H(+). It functions in the pathway polyol metabolism; myo-inositol degradation into acetyl-CoA; acetyl-CoA from myo-inositol: step 7/7. In terms of biological role, catalyzes the oxidation of malonate semialdehyde (MSA) and methylmalonate semialdehyde (MMSA) into acetyl-CoA and propanoyl-CoA, respectively. Is involved in a myo-inositol catabolic pathway. Bicarbonate, and not CO2, is the end-product of the enzymatic reaction. This is Malonate-semialdehyde dehydrogenase 3 from Bacillus cereus (strain ZK / E33L).